We begin with the raw amino-acid sequence, 141 residues long: Large ribosomal subunit protein uL11 (141 aa).

It belongs to the universal ribosomal protein uL11 family. As to quaternary structure, part of the ribosomal stalk of the 50S ribosomal subunit. Interacts with L10 and the large rRNA to form the base of the stalk. L10 forms an elongated spine to which L12 dimers bind in a sequential fashion forming a multimeric L10(L12)X complex. In terms of processing, one or more lysine residues are methylated.

Its function is as follows. Forms part of the ribosomal stalk which helps the ribosome interact with GTP-bound translation factors. The polypeptide is Large ribosomal subunit protein uL11 (Picosynechococcus sp. (strain ATCC 27264 / PCC 7002 / PR-6) (Agmenellum quadruplicatum)).